Here is a 739-residue protein sequence, read N- to C-terminus: Nucleoprotein (739 aa).

An oligomerization, N-terminal arm region spans residues 1–25 (MDSRPQKIWMAPSLTESDMDYHKIL). Positions 26-405 (TAGLSVQQGI…TLRKERLAKL (380 aa)) are NP core. The tract at residues 415-647 (PKTSGHYDDD…DSDNTQSEHS (233 aa)) is disordered. Composition is skewed to low complexity over residues 449–458 (SQDTTIPDVV) and 504–514 (KGGQQKNSQKG). Positions 562 to 567 (LTPINE) match the Host PPP2R5C-binding motif motif. Over residues 567–579 (EEADPLDDADDET) the composition is skewed to acidic residues. The VP30-binding motif motif lies at 606–611 (PPAPVY). The span at 611 to 638 (YRDHSEKKELPQDEQQDQDHTQEARNQD) shows a compositional bias: basic and acidic residues.

The protein belongs to the filoviruses nucleoprotein family. In terms of assembly, homooligomer. Homomultimerizes to form the nucleocapsid. Binds to viral genomic RNA. Interacts with VP35 and VP30 to form the nucleocapsid. Interacts with host PPP2R5C; this interaction leads to VP30 dephosphorylation and viral transcription. Interacts with VP24; this interaction facilitates nucleocapsid assembly and genome packaging. Interacts with matrix protein VP40; this interaction allows recruitment of the nucleocapsid into progeny virions. Interacts with host STAU1. Interacts with host NXF1 (via RNA-binding domain); this interaction recruits NXF1 to the inclusion bodies were viral replication takes place, probably to export viral mRNA-NXF1 complexes from these sites. Interacts with host CCDC92; this interaction sequesters NP in the host cytoplasm. Interacts with host TRIM14. In terms of processing, phosphorylated by host. Post-translationally, O-glycosylated by host. Acetylated by host EP300 in vitro.

The protein resides in the virion. The protein localises to the host cytoplasm. In terms of biological role, oligomerizes into helical capsid to encapsidate the viral genome, protecting it from nucleases and the cellular innate immune response. VP35 binds to and stabilizes monomeric NP, keeping it soluble. Upon virus replication, NP is recruited to bind cooperatively viral genomic RNA and VP35 is released. The encapsidated genomic RNA is termed the nucleocapsid and serves as template for transcription and replication. The nucleocapsid is helical with a pitch of 10.81 NP per turn and a diameter of about 22nm. Each NP binds to six nucleotides of viral genomic RNA, three being exposed to the solvant and three hidden into the nucleocapsid. Also recruits host PPP2R5C phosphatase to dephosphorylate VP30 and thereby promote viral transcription. Upon virion assembly and budding, NP binds to VP24 and possibly host STAU1. This chain is Nucleoprotein (NP), found in Epomops franqueti (Franquet's epauletted fruit bat).